We begin with the raw amino-acid sequence, 75 residues long: U6-lycotoxin-Ls1e (75 aa).

An N-terminal signal peptide occupies residues 1–21 (MKLLLFTALVLVVISLIEVEA). Positions 22–25 (ENER) are excised as a propeptide.

Belongs to the neurotoxin 19 (CSTX) family. 06 (U6-Lctx) subfamily. Contains 4 disulfide bonds. As to expression, expressed by the venom gland.

It localises to the secreted. This chain is U6-lycotoxin-Ls1e, found in Lycosa singoriensis (Wolf spider).